The following is a 362-amino-acid chain: Heme A synthase (362 aa).

5 helical membrane passes run 12 to 32, 102 to 122, 128 to 148, 159 to 179, and 198 to 218; these read AVRI…LVGG, VIGA…DLGG, LWII…MVAS, VRLA…VWTL, and AAVL…VAGL. H262 provides a ligand contact to heme. 3 helical membrane passes run 264–281, 289–309, and 312–332; these read MLAY…IDAW, GALA…VTLL, and VPIG…TLAV. H320 is a binding site for heme.

It belongs to the COX15/CtaA family. Type 2 subfamily. Interacts with CtaB. Heme b is required as a cofactor.

The protein localises to the cell membrane. It carries out the reaction Fe(II)-heme o + 2 A + H2O = Fe(II)-heme a + 2 AH2. It participates in porphyrin-containing compound metabolism; heme A biosynthesis; heme A from heme O: step 1/1. Functionally, catalyzes the conversion of heme O to heme A by two successive hydroxylations of the methyl group at C8. The first hydroxylation forms heme I, the second hydroxylation results in an unstable dihydroxymethyl group, which spontaneously dehydrates, resulting in the formyl group of heme A. In Rhodopseudomonas palustris (strain BisB18), this protein is Heme A synthase.